The chain runs to 149 residues: Transcriptional repressor NrdR (149 aa).

The segment at 3–34 (CPFCSAVDTKVIDSRLVAEGHQVRRRRECLLC) is a zinc-finger region. Residues 49 to 139 (PRVIKSNGSR…VYRSFEDIRE (91 aa)) form the ATP-cone domain.

This sequence belongs to the NrdR family. It depends on Zn(2+) as a cofactor.

Functionally, negatively regulates transcription of bacterial ribonucleotide reductase nrd genes and operons by binding to NrdR-boxes. The chain is Transcriptional repressor NrdR from Aeromonas hydrophila subsp. hydrophila (strain ATCC 7966 / DSM 30187 / BCRC 13018 / CCUG 14551 / JCM 1027 / KCTC 2358 / NCIMB 9240 / NCTC 8049).